Consider the following 240-residue polypeptide: Endo-chitosanase B (240 aa).

The N-terminal stretch at 1-17 is a signal peptide; it reads MRLSEILAVALVTGATA. A glycan (N-linked (GlcNAc...) asparagine) is linked at N86.

The protein belongs to the glycosyl hydrolase 75 family.

Its subcellular location is the secreted. It carries out the reaction Endohydrolysis of beta-(1-&gt;4)-linkages between D-glucosamine residues in a partly acetylated chitosan.. Functionally, chitosanase catalyzing the endo-type cleavage of chitosan, the deacylated form of chitin. Chitosanase may be crucial in the degradation of the deacetylated portion of chitin in the fungal cell wall. Chitoolisaccharides produced by the hydrolysis of partially N-acetylated chitosan are known to have many biological activities, including antibacterial activity, immune-enhancing effects, and elicitor activity. This is Endo-chitosanase B (csnB) from Aspergillus oryzae (Yellow koji mold).